We begin with the raw amino-acid sequence, 1111 residues long: uncharacterized protein (1111 aa).

Residues 1-31 (MIRKLMKIPPFFTALFASAMFTLSVSQGVLA) form the signal peptide. 11 helical membrane passes run 490 to 510 (LPYL…IFKF), 538 to 558 (LALL…LAVC), 572 to 592 (FWHW…WISL), 620 to 640 (IIVV…TDAG), 644 to 664 (DVLG…IIAP), 694 to 714 (IPVG…LNLI), 797 to 817 (FIWT…VTVV), 840 to 860 (SITL…YVLV), 885 to 905 (ITTL…FATL), 922 to 942 (GLGF…ILLF), and 1003 to 1023 (LVIS…QLLL).

It belongs to the MscS (TC 1.A.23) family.

It localises to the cell membrane. This is an uncharacterized protein from Haemophilus influenzae (strain ATCC 51907 / DSM 11121 / KW20 / Rd).